The primary structure comprises 225 residues: DNA repair and recombination protein RadB (225 aa).

It belongs to the eukaryotic RecA-like protein family. RadB subfamily.

In terms of biological role, involved in DNA repair and in homologous recombination. May regulate the cleavage reactions of the branch-structured DNA. Has a very weak ATPase activity that is not stimulated by DNA. Binds DNA but does not promote DNA strands exchange. The sequence is that of DNA repair and recombination protein RadB from Methanococcoides burtonii (strain DSM 6242 / NBRC 107633 / OCM 468 / ACE-M).